The primary structure comprises 244 residues: Type I iodothyronine deiodinase (244 aa).

The Extracellular portion of the chain corresponds to 1–12; that stretch reads MGLSQLGLWLRR. The chain crosses the membrane as a helical; Signal-anchor for type III membrane protein span at residues 13–33; that stretch reads LWVLFQVALQVAVGKVFLILF. Topologically, residues 34-244 are cytoplasmic; it reads PSRVKQHIVA…VRAVLEKLHS (211 aa). Selenocysteine 121 is a catalytic residue. Selenocysteine 121 is a non-standard amino acid (selenocysteine).

Belongs to the iodothyronine deiodinase family. In terms of assembly, predominantly monomer. Can form homodimers but homodimerization is not essential for enzyme activity.

The protein resides in the cell membrane. It localises to the endoplasmic reticulum membrane. It is found in the basolateral cell membrane. The enzyme catalyses 3,3',5-triiodo-L-thyronine + iodide + A + H(+) = L-thyroxine + AH2. It catalyses the reaction 3,3',5'-triiodo-L-thyronine + iodide + A + H(+) = L-thyroxine + AH2. The catalysed reaction is 3,3'-diiodo-L-thyronine + iodide + A + H(+) = 3,3',5'-triiodo-L-thyronine + AH2. It carries out the reaction 3,3'-diiodo-L-thyronine + iodide + A + H(+) = 3,3',5-triiodo-L-thyronine + AH2. The enzyme catalyses 3'-iodo-L-thyronine + iodide + A + H(+) = 3',5'-diiodo-L-thyronine + AH2. It catalyses the reaction 3-iodo-L-thyronine + iodide + A + H(+) = 3,5-diiodo-L-thyronine + AH2. The catalysed reaction is 3-iodo-L-thyronine + iodide + A + H(+) = 3,3'-diiodo-L-thyronine + AH2. It carries out the reaction 3,3'-diiodothyronamine + iodide + A + H(+) = 3,3',5'-triiodothyronamine + AH2. The enzyme catalyses 3'-iodothyronamine + iodide + A + H(+) = 3',5'-diiodothyronamine + AH2. It catalyses the reaction 3-iodothyronamine + iodide + A + H(+) = 3,3'-diiodothyronamine + AH2. The catalysed reaction is 3,3'-diiodothyronamine + iodide + A + H(+) = 3,3',5-triiodothyronamine + AH2. It carries out the reaction 3-iodothyronamine + iodide + A + H(+) = 3,5-diiodothyronamine + AH2. The enzyme catalyses 3,3'-diiodo-L-thyronine sulfate + iodide + A + H(+) = 3,3',5'-triiodo-L-thyronine sulfate + AH2. It catalyses the reaction 3,3',5'-triiodo-L-thyronine sulfate + iodide + A + H(+) = L-thyroxine sulfate + AH2. The catalysed reaction is 3,3'-diiodo-L-thyronine sulfate + iodide + A + H(+) = 3,3',5-triiodo-L-thyronine sulfate + AH2. Its function is as follows. Plays a crucial role in the metabolism of thyroid hormones (TH) and has specific roles in TH activation and inactivation by deiodination. Catalyzes the deiodination of L-thyroxine (T4) to 3,5,3'-triiodothyronine (T3) and 3',5'-diiodothyronine (3',5'-T2) to 3'-monoiodothyronine (3'-T1) via outer-ring deiodination (ORD). Catalyzes the deiodination of T4 to 3,3',5'-triiodothyronine (rT3), T3 to 3,3'-diiodothyronine (3,3'-T2), 3,5-diiodothyronine (3,5-T2) to 3-monoiodothyronine (3-T1) and 3,3'-T2 to 3-T1 via inner-ring deiodination (IRD). Catalyzes the deiodination of rT3 to 3,3'-T2 via ORD. Catalyzes the phenolic ring deiodinations of 3,3',5'-triiodothyronamine, 3',5'-diiodothyronamine and 3,3'-diiodothyronamine as well as tyrosyl ring deiodinations of 3,5,3'-triiodothyronamine and 3,5-diiodothyronamine. Catalyzes the deiodination of L-thyroxine sulfate and 3,3',5-triiodo-L-thyronine sulfate via IRD and of 3,3',5'-triiodo-L-thyronine sulfate via ORD. In Felis catus (Cat), this protein is Type I iodothyronine deiodinase (DIO1).